The sequence spans 858 residues: Bifunctional uridylyltransferase/uridylyl-removing enzyme (858 aa).

The tract at residues 1–318 (MNPTDLHPIK…FPRPESDARA (318 aa)) is uridylyltransferase. Positions 319-674 (IDEEFRSLHG…VRPTEEGSGL (356 aa)) are uridylyl-removing. In terms of domain architecture, HD spans 437 to 559 (VDQHTLAVIR…VKDERHLNAL (123 aa)). ACT domains are found at residues 675–756 (QIMV…LADV) and 789–858 (RLSV…LAGE).

The protein belongs to the GlnD family. Requires Mg(2+) as cofactor.

It catalyses the reaction [protein-PII]-L-tyrosine + UTP = [protein-PII]-uridylyl-L-tyrosine + diphosphate. The enzyme catalyses [protein-PII]-uridylyl-L-tyrosine + H2O = [protein-PII]-L-tyrosine + UMP + H(+). Uridylyltransferase (UTase) activity is inhibited by glutamine, while glutamine activates uridylyl-removing (UR) activity. Modifies, by uridylylation and deuridylylation, the PII regulatory proteins (GlnB and homologs), in response to the nitrogen status of the cell that GlnD senses through the glutamine level. Under low glutamine levels, catalyzes the conversion of the PII proteins and UTP to PII-UMP and PPi, while under higher glutamine levels, GlnD hydrolyzes PII-UMP to PII and UMP (deuridylylation). Thus, controls uridylylation state and activity of the PII proteins, and plays an important role in the regulation of nitrogen assimilation and metabolism. This Bordetella avium (strain 197N) protein is Bifunctional uridylyltransferase/uridylyl-removing enzyme.